Here is a 206-residue protein sequence, read N- to C-terminus: N-(5'-phosphoribosyl)anthranilate isomerase (206 aa).

Belongs to the TrpF family.

The catalysed reaction is N-(5-phospho-beta-D-ribosyl)anthranilate = 1-(2-carboxyphenylamino)-1-deoxy-D-ribulose 5-phosphate. It participates in amino-acid biosynthesis; L-tryptophan biosynthesis; L-tryptophan from chorismate: step 3/5. This is N-(5'-phosphoribosyl)anthranilate isomerase from Pseudomonas putida (strain W619).